Reading from the N-terminus, the 150-residue chain is Ribonuclease K6 (150 aa).

Positions 1–23 (MVLCFPLLLLVLVLWGQVCPLHA) are cleaved as a signal peptide. Residue His38 is the Proton acceptor of the active site. Cystine bridges form between Cys46–Cys104, Cys60–Cys114, Cys78–Cys129, and Cys85–Cys92. Asn55 carries N-linked (GlcNAc...) asparagine glycosylation. Residues 61 to 65 (KPQNT) and Lys86 contribute to the substrate site. An N-linked (GlcNAc...) asparagine glycan is attached at Asn100. Arg105 serves as a coordination point for substrate. The active-site Proton donor is the His145.

It belongs to the pancreatic ribonuclease family. In terms of assembly, interacts (via N-terminus) with bacterial lipopolysaccharide (LPS).

It localises to the secreted. It is found in the lysosome. Its subcellular location is the cytoplasmic granule. Functionally, ribonuclease which shows a preference for the pyrimidines uridine and cytosine. Has potent antibacterial activity against a range of Gram-positive and Gram-negative bacteria, including P.aeruginosa, A.baumanii, M.luteus, S.aureus, E.faecalis, E.faecium, S.saprophyticus and E.coli. Causes loss of bacterial membrane integrity, and also promotes agglutination of Gram-negative bacteria. Probably contributes to urinary tract sterility. Bactericidal activity is independent of RNase activity. This Aotus trivirgatus (Three-striped night monkey) protein is Ribonuclease K6 (RNASE6).